Here is a 362-residue protein sequence, read N- to C-terminus: Trans-enoyl reductase phm4 (362 aa).

50 to 53 (VDAK) contacts NADP(+). 136 to 143 (TCFMTCGL) contacts substrate. NADP(+) is bound by residues 171–174 (ATAT), 194–197 (SPHS), Tyr-212, and 259–260 (LD). Position 280–284 (280–284 (GPIML)) interacts with substrate. 349-350 (VN) serves as a coordination point for NADP(+).

Belongs to the zinc-containing alcohol dehydrogenase family. As to quaternary structure, monomer.

The protein operates within secondary metabolite biosynthesis. In terms of biological role, trans-enoyl reductase; part of the gene cluster that mediates the biosynthesis of the trans-fused decalin-containing tetramic acid phomasetin, the stereochemical opposite of the HIV-1 integrase inhibitor equisetin. The PKS module of phm1 together with the enoylreductase phm4 catalyze the formation of the polyketide unit which is then conjugated to L-serine by the condensation domain of the phm1 NRPS module. Activity of the Dieckmann cyclase domain (RED) of phm1 results in release of the Dieckmann product intermediate. The Diels-Alderase phm7 then uses the Dieckmann product of phm1 as substrate and catalyzes the Diels-Alder cycloaddition to form the decalin ring of N-desmethylphomasetin. N-desmethylphomasetin is further methylated to phomasetin by the methyltransferase phm5. In Pyrenochaetopsis sp, this protein is Trans-enoyl reductase phm4.